We begin with the raw amino-acid sequence, 109 residues long: Phosphoribosyl-ATP pyrophosphatase (109 aa).

This sequence belongs to the PRA-PH family.

The protein resides in the cytoplasm. The catalysed reaction is 1-(5-phospho-beta-D-ribosyl)-ATP + H2O = 1-(5-phospho-beta-D-ribosyl)-5'-AMP + diphosphate + H(+). Its pathway is amino-acid biosynthesis; L-histidine biosynthesis; L-histidine from 5-phospho-alpha-D-ribose 1-diphosphate: step 2/9. The chain is Phosphoribosyl-ATP pyrophosphatase from Sphingopyxis alaskensis (strain DSM 13593 / LMG 18877 / RB2256) (Sphingomonas alaskensis).